A 93-amino-acid chain; its full sequence is Small ribosomal subunit protein uS15 (93 aa).

The protein belongs to the universal ribosomal protein uS15 family. As to quaternary structure, part of the 30S ribosomal subunit. Forms a bridge to the 50S subunit in the 70S ribosome, contacting the 23S rRNA.

One of the primary rRNA binding proteins, it binds directly to 16S rRNA where it helps nucleate assembly of the platform of the 30S subunit by binding and bridging several RNA helices of the 16S rRNA. In terms of biological role, forms an intersubunit bridge (bridge B4) with the 23S rRNA of the 50S subunit in the ribosome. The protein is Small ribosomal subunit protein uS15 of Anaplasma phagocytophilum (strain HZ).